Here is a 690-residue protein sequence, read N- to C-terminus: DNA topoisomerase 1 (690 aa).

The Toprim domain maps to 3–121 (DYLVIVESPA…EITKQAIKDA (119 aa)). The Mg(2+) site is built by glutamate 9 and aspartate 82. The 430-residue stretch at 129-558 (NMDLVDAQQA…DFYKGFEERL (430 aa)) folds into the Topo IA-type catalytic domain. The interaction with DNA stretch occupies residues 163-168 (SAGRVQ). Tyrosine 298 functions as the O-(5'-phospho-DNA)-tyrosine intermediate in the catalytic mechanism. A disordered region spans residues 329-354 (NGTKAVKKDKKSQDAHEAIRPTSVER). Basic and acidic residues predominate over residues 339–354 (KSQDAHEAIRPTSVER). C4-type zinc fingers lie at residues 579–605 (CEKC…FPDC), 619–647 (CPKC…YPEC), and 660–683 (CPKC…CSSC).

Belongs to the type IA topoisomerase family. Monomer. Requires Mg(2+) as cofactor.

It catalyses the reaction ATP-independent breakage of single-stranded DNA, followed by passage and rejoining.. In terms of biological role, releases the supercoiling and torsional tension of DNA, which is introduced during the DNA replication and transcription, by transiently cleaving and rejoining one strand of the DNA duplex. Introduces a single-strand break via transesterification at a target site in duplex DNA. The scissile phosphodiester is attacked by the catalytic tyrosine of the enzyme, resulting in the formation of a DNA-(5'-phosphotyrosyl)-enzyme intermediate and the expulsion of a 3'-OH DNA strand. The free DNA strand then undergoes passage around the unbroken strand, thus removing DNA supercoils. Finally, in the religation step, the DNA 3'-OH attacks the covalent intermediate to expel the active-site tyrosine and restore the DNA phosphodiester backbone. In Halalkalibacterium halodurans (strain ATCC BAA-125 / DSM 18197 / FERM 7344 / JCM 9153 / C-125) (Bacillus halodurans), this protein is DNA topoisomerase 1.